The following is a 380-amino-acid chain: Genome polyprotein (380 aa).

2 disordered regions span residues 54–154 and 349–380; these read GTVD…TGKI and GNVGETQENTERHTAGDVSRNMHSLLGVQQHH. Low complexity predominate over residues 67–84; the sequence is QGTTPPATGSGAKPATSG. 2 stretches are compositionally biased toward gly residues: residues 85–99 and 106–123; these read AGSGSGTGAGTGVTG and SGTGTGSGATGGQSGSGS. Low complexity predominate over residues 129–140; sequence NTGSAGTNATGG.

This sequence belongs to the potyviridae genome polyprotein family. Post-translationally, genome polyprotein of potyviruses undergoes post-translational proteolytic processing by the main proteinase NIa-pro resulting in the production of at least ten individual proteins. The P1 proteinase and the HC-pro cleave only their respective C-termini autocatalytically. 6K1 is essential for proper proteolytic separation of P3 from CI.

The protein resides in the virion. It carries out the reaction RNA(n) + a ribonucleoside 5'-triphosphate = RNA(n+1) + diphosphate. An RNA-dependent RNA polymerase that plays an essential role in the virus replication. In terms of biological role, involved in aphid transmission, cell-to-cell and systemis movement, encapsidation of the viral RNA and in the regulation of viral RNA amplification. The sequence is that of Genome polyprotein from Sorghum halepense (Johnson grass).